The primary structure comprises 466 residues: Protein tilB homolog (466 aa).

LRR repeat units lie at residues 22–43, 45–66, 67–88, and 89–110; these read SLEELSLHQQEIERLEHIDKWC, DLKILYLQNNLIGKIENVSKLK, KLEYLNLALNNIEKIENLEGCE, and ELAKLDLTVNFIGELSSIKTLK. Residues 123–161 form the LRRCT domain; sequence NPCAFFDHYREFVVATLPQLKWLDGKGIEPSERIKALQE. The stretch at 178–204 forms a coiled coil; it reads LKRAKLKEEAQRKHQEEDKNEDKRSNA. Composition is skewed to basic and acidic residues over residues 185-202 and 269-279; these read EEAQRKHQEEDKNEDKRS and EKQRKNQEKLS. 2 disordered regions span residues 185 to 206 and 269 to 288; these read EEAQRKHQEEDKNEDKRSNAGF and EKQRKNQEKLSERKKKVKPP. Residues 301–396 form the CS domain; sequence VNEPKIDFSL…GGQRAFTSVK (96 aa). The disordered stretch occupies residues 418 to 466; the sequence is VDPSKHSFPDVTNIVQGKKHTPRRRPEPKIIPSEEDPTFEDNPEVPPLI. A compositionally biased stretch (acidic residues) spans 450 to 460; the sequence is SEEDPTFEDNP.

It belongs to the tilB family. In terms of assembly, interacts (via CS domain) with ZMYND10 (via C-terminus).

It localises to the cytoplasm. It is found in the cell projection. The protein localises to the cilium. Functionally, may play a role in dynein arm assembly, hence essential for proper axoneme building for cilia motility. In Macaca fascicularis (Crab-eating macaque), this protein is Protein tilB homolog (LRCC6).